The sequence spans 159 residues: MAGISSARLSEERKNWRRDHPYGFFARPSTNTDGSLNLYVWNCGIPGKTKTNWEGGVYPLIMEFTEDYPSKPPKCRFPKDFFHPNVYPSGTVCLSILNEEADWKPSVTIKTVLLGIQDLLDNPNPKSPAQQLPIHLFLTNKEEYDKKVKAQSKVYPPPQ.

A UBC core domain is found at 4–157; the sequence is ISSARLSEER…VKAQSKVYPP (154 aa). Cysteine 93 (glycyl thioester intermediate) is an active-site residue.

Belongs to the ubiquitin-conjugating enzyme family.

The protein resides in the nucleus. It participates in protein modification; protein sumoylation. Functionally, accepts the ubiquitin-like protein sumo from the E1 complex and catalyzes its covalent attachment to other proteins with the help of an E3 ligase. The protein is Sumo-conjugating enzyme ubc9 (ubc9) of Dictyostelium discoideum (Social amoeba).